The chain runs to 464 residues: MSVEKTNQSWGGRFSEPVDAFVARFTASVDFDKRLYRHDIMGSIAHATMLAKVGVLSDAERDAIIDGLQQIQAEIEAGSFDWRVDLEDVHMNIEARLTDRIGVTGKKLHTGRSRNDQVATDIRLWLRDEIDTILAEITRLQEGLLGLAEAEADTIMPGFTHLQTAQPVTFGHHLLAWFEMLGRDYERLVDCRKRVNRMPLGSAALAGTTYPIQREITCQLLGFDAVGGNSLDGVSDRDFAIEFCAAASLAMMHLSRFSEELVLWTSAQFQFIDLPDRFCTGSSIMPQKKNPDVPELVRGKSGRVFGALTGLLTLMKGQPLAYNKDNQEDKEPLFDTADTLHDSLRAFADMVPAIRPRREIMREAARRGFSTATDLADYLVRKGLPFRDCHEIVGHAVKYGVDSGKDLAEMSLDELRRFSEQIDADVFDVLTLEGSVNARDHIGGTAPNQVRAAVARGRKLLAQR.

It belongs to the lyase 1 family. Argininosuccinate lyase subfamily.

The protein resides in the cytoplasm. The enzyme catalyses 2-(N(omega)-L-arginino)succinate = fumarate + L-arginine. The protein operates within amino-acid biosynthesis; L-arginine biosynthesis; L-arginine from L-ornithine and carbamoyl phosphate: step 3/3. The chain is Argininosuccinate lyase from Pseudomonas aeruginosa (strain LESB58).